Here is a 453-residue protein sequence, read N- to C-terminus: UDP-N-acetylmuramoylalanine--D-glutamate ligase (453 aa).

117–123 provides a ligand contact to ATP; sequence GTNGKTT.

Belongs to the MurCDEF family.

It localises to the cytoplasm. It carries out the reaction UDP-N-acetyl-alpha-D-muramoyl-L-alanine + D-glutamate + ATP = UDP-N-acetyl-alpha-D-muramoyl-L-alanyl-D-glutamate + ADP + phosphate + H(+). The protein operates within cell wall biogenesis; peptidoglycan biosynthesis. Functionally, cell wall formation. Catalyzes the addition of glutamate to the nucleotide precursor UDP-N-acetylmuramoyl-L-alanine (UMA). The protein is UDP-N-acetylmuramoylalanine--D-glutamate ligase of Caldicellulosiruptor saccharolyticus (strain ATCC 43494 / DSM 8903 / Tp8T 6331).